A 518-amino-acid chain; its full sequence is DNA-binding protein D-ETS-4 (518 aa).

Disordered stretches follow at residues 74-113 (SQPIQQQQQPTAPYTNPSSHQLIPPPAYPHSAYPSPQSSP) and 152-172 (LPPSPPESNCETPSPRSSCGE). The span at 84-94 (TAPYTNPSSHQ) shows a compositional bias: polar residues. Residues 102-113 (PHSAYPSPQSSP) are compositionally biased toward low complexity. Residues 158–171 (ESNCETPSPRSSCG) are compositionally biased toward polar residues. The PNT domain occupies 258-344 (HAKREADAIC…AQLEIWKMAY (87 aa)). The disordered stretch occupies residues 393–426 (APLNGSTTSPPATNASNGGTATVKRPNGGRTGGG). A compositionally biased stretch (polar residues) spans 396-412 (NGSTTSPPATNASNGGT). Residues 430 to 513 (IHLWQFLKEL…RSQRLVYQFC (84 aa)) constitute a DNA-binding region (ETS).

The protein belongs to the ETS family. Transient high expression in pole cells during embryonic stages 8-11.

The protein resides in the nucleus. In terms of biological role, may have a role in germline development. This Drosophila melanogaster (Fruit fly) protein is DNA-binding protein D-ETS-4 (Ets98B).